A 393-amino-acid polypeptide reads, in one-letter code: MKDVVIVGALRTPIGCFRGALAGHSAVELGSLVVKALIERTGVPAYAVDEVILGQVLTAGAGQNPARQSAIKGGLPNSVSAITINDVCGSGLKALHLATQAIQCGEADIVIAGGQENMSRAPHVLTDSRTGAQLGNSQLVDSLVHDGLWDAFNDYHIGVTAENLAREYGISRQLQDAYALSSQQKARAAIDAGRFKDEIVPVMTQSNGQTLVVDTDEQPRTDASAEGLARLNPSFDSLGSVTAGNASSINDGAAAVMMMSEAKARALNLPVLARIRAFASVGVDPALMGIAPVYATRRCLERVGWQLAEVDLIEANEAFAAQALSVGKMLEWDERRVNVNGGAIALGHPIGASGCRILVSLVHEMVKRNARKGLATLCIGGGQGVALTIERDE.

The Acyl-thioester intermediate role is filled by cysteine 88. Active-site proton acceptor residues include histidine 348 and cysteine 378.

The protein belongs to the thiolase-like superfamily. Thiolase family.

The protein localises to the cytoplasm. It catalyses the reaction 2 acetyl-CoA = acetoacetyl-CoA + CoA. This chain is Probable acetyl-CoA acetyltransferase (yqeF), found in Escherichia coli (strain K12).